The primary structure comprises 660 residues: MTDRIVPATLVFREDGTVVSPLYGDIYHSAAGALAQADHVFIRGNGLPERWRHERAFTIIETGFGTGCNFLATWAAWRADPSHCERLHFVSVEKHPFAREDLRRAAAHIVAYTTITTITPIAPLVDELANAWPALTPGVHRLEFDDGRVTLTLVFGDALDVLPNLALRAHAFYLDGFAPSKNADLWSPAIFKSLAKLADERATFATYTSSGAVKRALDEAGFAYRKVDGFAGKRAMLVGEFAPRWRVRRHEPPRAFSTDRRDAIVIGAGLAGCAVVERLAARGWHVTLIERRERIASEASGNPAGVFHPMIARDDNLAARLSRAGFLHALHRWRALERAGHAFSRSTHGLVQLATSDDEFERMRESIDALGVPAELASALSRDDARALLRTDVAHGGWLFAQGGSISPAALAAAQCAAAGDRLSRIVGVEIARLERGGDGRWRALDASGATIAQASVVVVANAADAARIAGLRHAPTQRVRGQLTLLPPGSAPAVPLPVIGDGYVVPLANGVTLTGATYEPDDTDATPREAGHRENLERLERLLPAFSANALDAGALAGRVGFRCVASDRLPLVGELGDEAAAAREAAALTGARLRDVPRATGLYGAFGYGSRGLVWAALGAELIAAQIDGEPWPLERELAEAIDPARFLVRALRHGRVA.

Residues 1–242 (MTDRIVPATL…KRAMLVGEFA (242 aa)) form a tRNA (mnm(5)s(2)U34)-methyltransferase region. The tract at residues 266 to 660 (IGAGLAGCAV…VRALRHGRVA (395 aa)) is FAD-dependent cmnm(5)s(2)U34 oxidoreductase.

It in the N-terminal section; belongs to the methyltransferase superfamily. tRNA (mnm(5)s(2)U34)-methyltransferase family. The protein in the C-terminal section; belongs to the DAO family. FAD is required as a cofactor.

It is found in the cytoplasm. The enzyme catalyses 5-aminomethyl-2-thiouridine(34) in tRNA + S-adenosyl-L-methionine = 5-methylaminomethyl-2-thiouridine(34) in tRNA + S-adenosyl-L-homocysteine + H(+). Functionally, catalyzes the last two steps in the biosynthesis of 5-methylaminomethyl-2-thiouridine (mnm(5)s(2)U) at the wobble position (U34) in tRNA. Catalyzes the FAD-dependent demodification of cmnm(5)s(2)U34 to nm(5)s(2)U34, followed by the transfer of a methyl group from S-adenosyl-L-methionine to nm(5)s(2)U34, to form mnm(5)s(2)U34. This is tRNA 5-methylaminomethyl-2-thiouridine biosynthesis bifunctional protein MnmC from Burkholderia pseudomallei (strain 1106a).